The following is a 292-amino-acid chain: Acetylglutamate kinase (292 aa).

Substrate-binding positions include 64–65 (GG), R86, and N190.

It belongs to the acetylglutamate kinase family. ArgB subfamily.

It localises to the cytoplasm. It catalyses the reaction N-acetyl-L-glutamate + ATP = N-acetyl-L-glutamyl 5-phosphate + ADP. The protein operates within amino-acid biosynthesis; L-arginine biosynthesis; N(2)-acetyl-L-ornithine from L-glutamate: step 2/4. Catalyzes the ATP-dependent phosphorylation of N-acetyl-L-glutamate. In Geotalea daltonii (strain DSM 22248 / JCM 15807 / FRC-32) (Geobacter daltonii), this protein is Acetylglutamate kinase.